Here is an 885-residue protein sequence, read N- to C-terminus: Chitobiase (885 aa).

A signal peptide spans 1–27 (MNAFKLSALARLTATMGFLGGMGSAMA). 3 cysteine pairs are disulfide-bonded: Cys56/Cys66, Cys400/Cys408, and Cys505/Cys578. Glu540 acts as the Proton donor in catalysis. Residues 866–885 (EVQVRSVSPDGKRYSRAEKV) form a disordered region. Positions 875-885 (DGKRYSRAEKV) are enriched in basic and acidic residues.

The protein belongs to the glycosyl hydrolase 20 family. Monomer.

The protein resides in the periplasm. It catalyses the reaction Hydrolysis of terminal non-reducing N-acetyl-D-hexosamine residues in N-acetyl-beta-D-hexosaminides.. The protein operates within glycan degradation; chitin degradation. Functionally, digests the beta-1,4-glycosidic bonds in N-acetylglucosamine (GlcNAc) oligomers (mainly dimers). The chain is Chitobiase (chb) from Serratia marcescens.